The following is a 521-amino-acid chain: AAA ATPase forming ring-shaped complexes (521 aa).

The stretch at 4-44 (TEDLAALNDRLMAKNHALAEALNRAGKELTKAKSRLAQLAQ) forms a coiled coil. Residue 235–240 (GNGKTM) coordinates ATP.

The protein belongs to the AAA ATPase family. In terms of assembly, homohexamer. Assembles into a hexameric ring structure.

In Bifidobacterium longum subsp. infantis (strain ATCC 15697 / DSM 20088 / JCM 1222 / NCTC 11817 / S12), this protein is AAA ATPase forming ring-shaped complexes.